We begin with the raw amino-acid sequence, 777 residues long: Cullin-3 (777 aa).

The segment at 568 to 596 (YPPPKASMSNEENGPGPSSSGESMKERKP) is disordered. Positions 576–589 (SNEENGPGPSSSGE) are enriched in low complexity. The region spanning 707–769 (DRKLEVEAAI…REYLARDEHD (63 aa)) is the Cullin neddylation domain. Lys-721 participates in a covalent cross-link: Glycyl lysine isopeptide (Lys-Gly) (interchain with G-Cter in NEDD8).

Belongs to the cullin family. As to quaternary structure, probable component of multiple cullin-RING-based BCB (BTB-CUL3-BTB) E3 ubiquitin-protein ligase complexes formed by cul-3, rbx-1 and a variable BTB domain-containing protein acting as both, adapter to cullin and substrate recognition component. Interacts with bath-15, bath-40, bath-41, bath-42, C17F4.8, tag-303, D2045.8, F57C2.1, ZC239.15 and B0281.5. Interacts with mel-26 (via BTB domain). Interacts with dcn-1. In terms of processing, neddylated. Deneddylated via its interaction with the COP9 signalosome (CSN) complex.

The protein resides in the cytoplasm. It localises to the nucleus. It participates in protein modification; protein ubiquitination. Functionally, probable core component of multiple cullin-RING-based BCB (BTB-CUL3-BTB) E3 ubiquitin-protein ligase complexes which mediate the ubiquitination and subsequent proteasomal degradation of target proteins. Probably acts as a scaffold protein which may contribute to catalysis through positioning of the substrate and the ubiquitin-conjugating enzyme. Required to target mei-3/katanin for degradation at the meiosis to mitosis transition via its neddylation and deneddylation. Functions in ubiquitin-mediated degradation of CKIs to target cki-1 for degradation. Regulates microtubule stability in the early embryo. In body wall muscles, involved in the organization of myosin thick filaments, likely by regulating the degradation of microtubule severing protein mei-1 downstream of unc-89. Together with spop-1, may promote the ubiquitination and proteasomal degradation of target bromodomain-containing proteins such as bet-1. The chain is Cullin-3 from Caenorhabditis elegans.